The primary structure comprises 396 residues: MSTLKLNPYFGEYGGMYVPQILVPALKQLETAFVEAQEDEDFKAEFTDLLKNYAGRPTALTLTRNLSPNPMVKIYLKREDLLHGGAHKTNQVLGQALLAKRMGKKEIIAETGAGQHGVATALACALLGLKCKVYMGAKDVARQSPNVFRMRLMGAEVIPVTSGSATLKDACNEAMRDWSGSYEKAHYLLGTAAGPHPFPTIVREFQRIIGEETKKQMLEREGRLPDAVIACVGGGSNAIGMFADFIDEPSVELIGVEPAGKGIDTPMHGAPLKHGKTGIFFGMKAPLMQDSEGQIEESYSISAGLDFPSVGPQHAHLNATGRARYESATDDEALEAFQQLARCEGIIPALESAHAIAYAVKMARECTKETILVVNLSGRGDKDIFTVSDILNGKEV.

N6-(pyridoxal phosphate)lysine is present on K88.

Belongs to the TrpB family. Tetramer of two alpha and two beta chains. It depends on pyridoxal 5'-phosphate as a cofactor.

It carries out the reaction (1S,2R)-1-C-(indol-3-yl)glycerol 3-phosphate + L-serine = D-glyceraldehyde 3-phosphate + L-tryptophan + H2O. It participates in amino-acid biosynthesis; L-tryptophan biosynthesis; L-tryptophan from chorismate: step 5/5. The beta subunit is responsible for the synthesis of L-tryptophan from indole and L-serine. This Shewanella putrefaciens (strain CN-32 / ATCC BAA-453) protein is Tryptophan synthase beta chain.